We begin with the raw amino-acid sequence, 411 residues long: Tyrosine--tRNA ligase (411 aa).

Residue Y34 participates in L-tyrosine binding. Residues 39 to 48 (CTATSLHIGS) carry the 'HIGH' region motif. 2 residues coordinate L-tyrosine: Y171 and Q175. The 'KMSKS' region signature appears at 231–235 (KMGKT). An ATP-binding site is contributed by K234. The region spanning 345–411 (ISAYELFHEA…GKKRHILVRV (67 aa)) is the S4 RNA-binding domain.

It belongs to the class-I aminoacyl-tRNA synthetase family. TyrS type 1 subfamily. As to quaternary structure, homodimer.

The protein localises to the cytoplasm. The catalysed reaction is tRNA(Tyr) + L-tyrosine + ATP = L-tyrosyl-tRNA(Tyr) + AMP + diphosphate + H(+). Its function is as follows. Catalyzes the attachment of tyrosine to tRNA(Tyr) in a two-step reaction: tyrosine is first activated by ATP to form Tyr-AMP and then transferred to the acceptor end of tRNA(Tyr). This chain is Tyrosine--tRNA ligase, found in Rickettsia felis (strain ATCC VR-1525 / URRWXCal2) (Rickettsia azadi).